Reading from the N-terminus, the 317-residue chain is Zinc transporter ZIP3 (317 aa).

The Extracellular portion of the chain corresponds to 1–3; the sequence is MSQ. Residues 4–24 traverse the membrane as a helical segment; that stretch reads LLVAKVLCMVGVFFFMLLGSL. At 25–42 the chain is on the cytoplasmic side; that stretch reads LPVKVIEADFEKAHRSKK. The chain crosses the membrane as a helical span at residues 43 to 63; sequence VLSLCNTFGGGVFLATCFNAL. Residues 64 to 85 are Extracellular-facing; sequence LPAVRDKLQQVLSLGHISTDYP. Residues 86–106 form a helical membrane-spanning segment; that stretch reads LAETLMMVGFFLTVFVEQLVL. Residues 107–172 are Cytoplasmic-facing; that stretch reads TFRRERPPFI…RELGRPGPLR (66 aa). Serine 125 and serine 129 each carry phosphoserine. Residues 173–193 form a helical membrane-spanning segment; that stretch reads LLSLVFALSAHSVFEGLALGL. Residues 194–199 are Extracellular-facing; the sequence is QEEGER. Residues 200-220 traverse the membrane as a helical segment; that stretch reads VVSLFVGVAVHETLVAVALGI. Over 221–232 the chain is Cytoplasmic; the sequence is SMARSAVPLRDA. A helical membrane pass occupies residues 233–253; that stretch reads AKLAVTVSAMIPVGIGLGLGI. At 254-265 the chain is on the extracellular side; it reads ESARSVASSVAS. A helical membrane pass occupies residues 266 to 286; that stretch reads ALLQGLAGGTFLFVTFLEILA. Over 287–294 the chain is Cytoplasmic; that stretch reads KELEERSE. Residues 295–315 traverse the membrane as a helical segment; sequence QLLKVLFLVLGYAVLAGMVFL. Topologically, residues 316–317 are extracellular; it reads KW.

The protein belongs to the ZIP transporter (TC 2.A.5) family.

The protein localises to the cell membrane. It is found in the apical cell membrane. The enzyme catalyses Zn(2+)(in) = Zn(2+)(out). In terms of biological role, transporter for the divalent cation Zn(2+). Mediates the influx of Zn(2+) into cells from extracellular space. Controls Zn(2+) accumulation into dentate gyrus granule cells in the hippocampus. Mediates Zn(2+) reuptake from the secreted milk within the alveolar lumen. This chain is Zinc transporter ZIP3 (Slc39a3), found in Rattus norvegicus (Rat).